Here is a 201-residue protein sequence, read N- to C-terminus: Glycerol-3-phosphate acyltransferase (201 aa).

The next 6 helical transmembrane spans lie at 10–30, 60–80, 86–106, 116–136, 139–159, and 166–186; these read MLIG…GLIL, LAAA…LIAA, AAIA…WIGF, LGVL…AWIV, LLTR…PIAL, and ALAA…RANI.

Belongs to the PlsY family. In terms of assembly, probably interacts with PlsX.

The protein resides in the cell inner membrane. The enzyme catalyses an acyl phosphate + sn-glycerol 3-phosphate = a 1-acyl-sn-glycero-3-phosphate + phosphate. It participates in lipid metabolism; phospholipid metabolism. Catalyzes the transfer of an acyl group from acyl-phosphate (acyl-PO(4)) to glycerol-3-phosphate (G3P) to form lysophosphatidic acid (LPA). This enzyme utilizes acyl-phosphate as fatty acyl donor, but not acyl-CoA or acyl-ACP. This is Glycerol-3-phosphate acyltransferase from Brucella ovis (strain ATCC 25840 / 63/290 / NCTC 10512).